Here is a 501-residue protein sequence, read N- to C-terminus: Fumarate reductase 2 (501 aa).

The transit peptide at 1–32 (MIRSVRRVFIYVSIFVLIIVLKRTLSGTDQTS) directs the protein to the mitochondrion. 37 to 51 (VVVIGSGLAGLTTSN) lines the FAD pocket. Catalysis depends on residues His281 and Arg304.

It belongs to the FAD-dependent oxidoreductase 2 family. FRD/SDH subfamily. Requires FAD as cofactor.

Its subcellular location is the mitochondrion. The enzyme catalyses succinate + NAD(+) = fumarate + NADH + H(+). In terms of biological role, irreversibly catalyzes the reduction of fumarate to succinate. Together with the second isozyme of soluble fumarate reductase (FRD1), essential for anaerobic growth. Involved in maintaining redox balance during oxygen deficiency conditions. Reduction of fumarate is the main source of succinate during fermentation, and under anaerobic conditions, the formation of succinate is strictly required for the reoxidation of FADH(2). This Saccharomyces cerevisiae (strain ATCC 204508 / S288c) (Baker's yeast) protein is Fumarate reductase 2 (OSM1).